The following is an 818-amino-acid chain: LPS-assembly protein LptD (818 aa).

Positions 1–33 (MVNETMKHQFKFNPLATAIFTLLCSGSIQSSYA) are cleaved as a signal peptide.

Belongs to the LptD family. Component of the lipopolysaccharide transport and assembly complex. Interacts with LptE and LptA.

Its subcellular location is the cell outer membrane. Its function is as follows. Together with LptE, is involved in the assembly of lipopolysaccharide (LPS) at the surface of the outer membrane. This is LPS-assembly protein LptD from Acinetobacter baumannii (strain ATCC 19606 / DSM 30007 / JCM 6841 / CCUG 19606 / CIP 70.34 / NBRC 109757 / NCIMB 12457 / NCTC 12156 / 81).